The following is a 141-amino-acid chain: Large ribosomal subunit protein uL11 (141 aa).

Belongs to the universal ribosomal protein uL11 family. In terms of assembly, part of the ribosomal stalk of the 50S ribosomal subunit. Interacts with L10 and the large rRNA to form the base of the stalk. L10 forms an elongated spine to which L12 dimers bind in a sequential fashion forming a multimeric L10(L12)X complex. One or more lysine residues are methylated.

Its function is as follows. Forms part of the ribosomal stalk which helps the ribosome interact with GTP-bound translation factors. The sequence is that of Large ribosomal subunit protein uL11 from Roseiflexus sp. (strain RS-1).